Reading from the N-terminus, the 248-residue chain is Triosephosphate isomerase (248 aa).

9–11 (NWK) serves as a coordination point for substrate. The Electrophile role is filled by histidine 93. Glutamate 163 acts as the Proton acceptor in catalysis. Substrate contacts are provided by residues glycine 169, serine 208, and 229–230 (GG).

This sequence belongs to the triosephosphate isomerase family. As to quaternary structure, homodimer.

It localises to the cytoplasm. The enzyme catalyses D-glyceraldehyde 3-phosphate = dihydroxyacetone phosphate. The protein operates within carbohydrate biosynthesis; gluconeogenesis. Its pathway is carbohydrate degradation; glycolysis; D-glyceraldehyde 3-phosphate from glycerone phosphate: step 1/1. Its function is as follows. Involved in the gluconeogenesis. Catalyzes stereospecifically the conversion of dihydroxyacetone phosphate (DHAP) to D-glyceraldehyde-3-phosphate (G3P). This Jannaschia sp. (strain CCS1) protein is Triosephosphate isomerase.